The chain runs to 196 residues: Carnitine operon protein CaiE (196 aa).

A disordered region spans residues threonine 173–arginine 196. The span at glutamine 187–arginine 196 shows a compositional bias: polar residues.

The protein belongs to the transferase hexapeptide repeat family.

It participates in amine and polyamine metabolism; carnitine metabolism. Its function is as follows. Overproduction of CaiE stimulates the activity of CaiB and CaiD. In Escherichia coli O7:K1 (strain IAI39 / ExPEC), this protein is Carnitine operon protein CaiE.